Here is a 184-residue protein sequence, read N- to C-terminus: Peptide deformylase (184 aa).

C92 and H134 together coordinate Fe cation. E135 is an active-site residue. H138 lines the Fe cation pocket.

This sequence belongs to the polypeptide deformylase family. The cofactor is Fe(2+).

It carries out the reaction N-terminal N-formyl-L-methionyl-[peptide] + H2O = N-terminal L-methionyl-[peptide] + formate. In terms of biological role, removes the formyl group from the N-terminal Met of newly synthesized proteins. Requires at least a dipeptide for an efficient rate of reaction. N-terminal L-methionine is a prerequisite for activity but the enzyme has broad specificity at other positions. This is Peptide deformylase from Psychrobacter cryohalolentis (strain ATCC BAA-1226 / DSM 17306 / VKM B-2378 / K5).